Reading from the N-terminus, the 281-residue chain is CCAAT/enhancer-binding protein epsilon (281 aa).

Residues 1 to 30 are disordered; it reads MSHGTYYECEPRGGQQPLEFSGGRAGPGEL. Lys121 is covalently cross-linked (Glycyl lysine isopeptide (Lys-Gly) (interchain with G-Cter in SUMO2)). Ser181 is modified (phosphoserine). The region spanning 204–267 is the bZIP domain; sequence SLEYRLRRER…DTLRNLFRQI (64 aa). The segment at 208–245 is basic motif; sequence RLRRERNNIAVRKSRDKAKRRIMETQQKVLEYMAENER. The segment at 246–267 is leucine-zipper; the sequence is LRSRVDQLTQELDTLRNLFRQI.

The protein belongs to the bZIP family. C/EBP subfamily. In terms of assembly, binds DNA as a homodimer and as a heterodimer. Can form stable heterodimers with CEBPA, CEBPB and CEBPD. Interacts with GATA1 and SPI1. Interacts with SMARCD2.

The protein localises to the nucleus. Transcriptional activator. C/EBP are DNA-binding proteins that recognize two different motifs: the CCAAT homology common to many promoters and the enhanced core homology common to many enhancers. Required for the promyelocyte-myelocyte transition in myeloid differentiation. The sequence is that of CCAAT/enhancer-binding protein epsilon (Cebpe) from Rattus norvegicus (Rat).